Consider the following 404-residue polypeptide: MQTSEREGCGPEVSPSTVPEATLESLPVPTKLPAFDLFNLVLSYKRLEVYLEPLKDAGDGVRYLLRWQTPLCSLLTCLGLNVLFLTLNEGAWYSVGALMISVPALLGYLQEGCQARLSESELMRRKYHSVRQEDLQRVRLSRPEAVAEVKSFLIQLEALLSRLCGTCEAAYRVLHWENPAVSSQFYGALLGTVCMLYLLPLCWVLALLNSTLFLGNVEFFRVVSEYRASLQRRMNPKQEESAFESPPPSDAGGKGALVDCTPAPTPTEDLTPGSVEEAEEAEPDEEFKDAIEEDDEGAPCPAEDELVLQDNGFLSKNEVLRSKVSRLTERLRKRYPTNNYGSCTGCSATFSVLKKRRNCSNCGNIFCSRCCSFKVPRSSMGATAPEAQRETVFVCASCNQTLSK.

Residues 1-20 (MQTSEREGCGPEVSPSTVPE) are disordered. The Cytoplasmic segment spans residues 1–66 (MQTSEREGCG…AGDGVRYLLR (66 aa)). Residues 1–92 (MQTSEREGCG…LFLTLNEGAW (92 aa)) are sufficient for homooligomerization. The sufficient for localization to endoplasmic reticulum tubular network and for interactions with REEP1, REEP5, ATL1, ATL2, ATL3 and SPAST stretch occupies residues 1–205 (MQTSEREGCG…LYLLPLCWVL (205 aa)). The necessary for interaction with RAB11A and function in neurite outgrowth stretch occupies residues 51-64 (LEPLKDAGDGVRYL). Residues 67–87 (WQTPLCSLLTCLGLNVLFLTL) form a helical membrane-spanning segment. Residue asparagine 88 is a topological domain, lumenal. Residues 89 to 109 (EGAWYSVGALMISVPALLGYL) form a helical membrane-spanning segment. The Cytoplasmic portion of the chain corresponds to 110-187 (QEGCQARLSE…NPAVSSQFYG (78 aa)). Residues 188-208 (ALLGTVCMLYLLPLCWVLALL) constitute an intramembrane region (helical). Residues 209 to 404 (NSTLFLGNVE…CASCNQTLSK (196 aa)) are Cytoplasmic-facing. The segment at 234 to 286 (MNPKQEESAFESPPPSDAGGKGALVDCTPAPTPTEDLTPGSVEEAEEAEPDEE) is disordered. Residues 271 to 354 (TPGSVEEAEE…GCSATFSVLK (84 aa)) form a necessary for interaction with KIF5A region. The span at 276–286 (EEAEEAEPDEE) shows a compositional bias: acidic residues. The interval 286–292 (EFKDAIE) is necessary for interaction with VAPA. The FYVE-type zinc-finger motif lies at 337-403 (TNNYGSCTGC…VCASCNQTLS (67 aa)). Zn(2+) is bound by residues cysteine 343, cysteine 346, cysteine 359, cysteine 362, cysteine 367, cysteine 370, cysteine 395, and cysteine 398.

As to quaternary structure, can form homooligomers (monomers, dimers and tetramers). Interacts with RAB11A (GDP-bound form); regulates RAB11A. Interacts with FKBP8; may negatively regulate ZFYVE27 phosphorylation. Interacts with VAPA (via MSP domain); may regulate ZFYVE27 retention in the endoplasmic reticulum and its function in cell projections formation. Interacts with VAPB (via MSP domain). Interacts with RAB11B (GDP-bound form), REEP1, REEP5, ATL1, ATL2, ATL3, SPAST, SURF4, KIF5A, KIF5B, KIF5C and RTN3. In terms of processing, phosphorylated. Phosphorylation is induced by NGF through the MAPK/ERK pathway and modulates interaction with RAB11A.

It localises to the recycling endosome membrane. The protein localises to the endoplasmic reticulum membrane. The protein resides in the cell projection. Its subcellular location is the growth cone membrane. Its function is as follows. Key regulator of RAB11-dependent vesicular trafficking during neurite extension through polarized membrane transport. Promotes axonal elongation and contributes to the establishment of neuronal cell polarity. Involved in nerve growth factor-induced neurite formation in VAPA-dependent manner. Contributes to both the formation and stabilization of the tubular ER network. Involved in ER morphogenesis by regulating the sheet-to-tubule balance and possibly the density of tubule interconnections. Acts as an adapter protein that facilitates the interaction of KIF5A with VAPA, VAPB, SURF4, RAB11A, RAB11B and RTN3 and the ZFYVE27-KIF5A complex contributes to the transport of these proteins in neurons. Can induce formation of neurite-like membrane protrusions in non-neuronal cells in a KIF5A/B-dependent manner. This Bos taurus (Bovine) protein is Protrudin (ZFYVE27).